A 1492-amino-acid polypeptide reads, in one-letter code: Cystic fibrosis transmembrane conductance regulator (1492 aa).

At 1–78 the chain is on the cytoplasmic side; the sequence is MQRSPIEKAN…KLVNALRRCF (78 aa). Residues 79 to 99 form a helical membrane-spanning segment; that stretch reads FWRFLFYGILLYFVEFTKAVQ. The ABC transmembrane type-1 1 domain occupies 82–366; it reads FLFYGILLYF…SAIQTWYDSL (285 aa). The Extracellular portion of the chain corresponds to 100–123; that stretch reads PLCLGRIIASYNAKNTYEREIAYY. A helical membrane pass occupies residues 124 to 147; sequence LALGLCLLFVVRTLFLHPAVFGLQ. The Cytoplasmic segment spans residues 148–196; that stretch reads HLGMQMRIALFSLIYKKILKMSSRVLDKIDTGQLVSLLSNNLNKFDEGV. Residues 197 to 217 traverse the membrane as a helical segment; it reads AVAHFVWIAPVQVVLLMGLIW. Topologically, residues 218 to 223 are extracellular; sequence NELTEF. A helical membrane pass occupies residues 224-244; that stretch reads VFCGLGFLIMLALFQAWLGKK. The Cytoplasmic segment spans residues 245-299; that stretch reads MMQYRDKRAGKINERLAITSEIIDNIQSVKVYCWEDAMEKIIDDIRQVELKLTRK. A helical transmembrane segment spans residues 300-320; it reads VAYCRYFSSSAFFFSGFFVVF. Residues 321-340 lie on the Extracellular side of the membrane; it reads LSVVPYAFIHTIKLRRIFTT. Residues 341-359 form a helical membrane-spanning segment; the sequence is ISYNIVLRMTVTRQFPSAI. Residues 360–867 are Cytoplasmic-facing; that stretch reads QTWYDSLGAI…YLRYVTTNRN (508 aa). Residues Trp-402, Ser-435, 459–466, and Gln-494 contribute to the ATP site; that span reads GSTGSGKS. In terms of domain architecture, ABC transporter 1 spans 424–647; that stretch reads NGDDGLFFSN…KPDFSSQLLG (224 aa). The tract at residues 655 to 840 is disordered R region; it reads SAERRNSILT…EEINEEDLKE (186 aa). Residues 868–888 form a helical membrane-spanning segment; it reads LVFVLILCLVIFLAEVAASLA. Positions 868–1169 constitute an ABC transmembrane type-1 2 domain; that stretch reads LVFVLILCLV…AVNSSIDVDG (302 aa). The Extracellular segment spans residues 889 to 932; it reads GLWIISGLAINTGSQTNDTSTDLSHLSVFSKFITNGSHYYIFYI. 2 N-linked (GlcNAc...) asparagine glycosylation sites follow: Asn-905 and Asn-923. Residues 933 to 953 form a discontinuously helical membrane-spanning segment; sequence YVGLADSFLALGVIRGLPLVH. At 954–1004 the chain is on the cytoplasmic side; that stretch reads TLVTVSKDLHKQMLHSVLQGPMTAFNKMKAGRILNRFIKDTAIIDDMLPLT. Residues 1005–1025 form a helical membrane-spanning segment; that stretch reads VFDFVQLILIVVGAICVVSVL. Residues 1026 to 1027 are Extracellular-facing; sequence QP. The helical transmembrane segment at 1028-1048 threads the bilayer; the sequence is YTLLAAIPVAVIFIMLRAYFL. Over 1049-1109 the chain is Cytoplasmic; the sequence is RTSQQLKQLE…TANWFLYLST (61 aa). A helical membrane pass occupies residues 1110–1130; sequence LRWFQMRIDIVFVLFFIAVTF. Residues 1131–1144 are Extracellular-facing; sequence IAIATHDVGEGQVG. Residues 1145 to 1165 form a helical membrane-spanning segment; that stretch reads IILTLAMNITSTLQWAVNSSI. Residues 1166–1492 are Cytoplasmic-facing; sequence DVDGLMRSVS…AEEDLQETRL (327 aa). Residues 1220-1453 enclose the ABC transporter 2 domain; the sequence is MMVNNLTAKY…ASLFKQVFGH (234 aa). ATP is bound by residues Tyr-1229 and 1254 to 1261; that span reads GRTGAGKS. Basic residues predominate over residues 1465-1474; the sequence is RNSSKRKTRP. The segment at 1465-1492 is disordered; that stretch reads RNSSKRKTRPKISALQEEAEEDLQETRL. Residues 1481–1492 show a composition bias toward acidic residues; it reads EEAEEDLQETRL. A PDZ-binding motif is present at residues 1483-1485; it reads AEE.

This sequence belongs to the ABC transporter superfamily. ABCC family. CFTR transporter (TC 3.A.1.202) subfamily. In terms of assembly, monomer; does not require oligomerization for channel activity. May form oligomers in the membrane. Phosphorylated; cAMP treatment promotes phosphorylation and activates the channel. Dephosphorylation decreases the ATPase activity (in vitro). Phosphorylation at PKA sites activates the channel. Phosphorylation at PKC sites enhances the response to phosphorylation by PKA. Expressed in the rectal gland (at protein level).

Its subcellular location is the apical cell membrane. It is found in the early endosome membrane. The protein localises to the cell membrane. The protein resides in the recycling endosome membrane. It localises to the endoplasmic reticulum membrane. The enzyme catalyses ATP + H2O + closed Cl(-) channel = ADP + phosphate + open Cl(-) channel.. It catalyses the reaction chloride(in) = chloride(out). It carries out the reaction hydrogencarbonate(in) = hydrogencarbonate(out). The catalysed reaction is ATP + H2O = ADP + phosphate + H(+). In terms of biological role, epithelial ion channel that plays an important role in the regulation of epithelial ion and water transport and fluid homeostasis. Mediates the transport of chloride ions across the cell membrane. Possesses an intrinsic ATPase activity and utilizes ATP to gate its channel; the passive flow of anions through the channel is gated by cycles of ATP binding and hydrolysis by the ATP-binding domains. The ion channel is also permeable to HCO(3)(-); selectivity depends on the extracellular chloride concentration. Exerts its function also by modulating the activity of other ion channels and transporters. Contributes to the regulation of the pH and the ion content of the epithelial fluid layer. In Squalus acanthias (Spiny dogfish), this protein is Cystic fibrosis transmembrane conductance regulator.